The sequence spans 216 residues: Probable transaldolase (216 aa).

Lys83 functions as the Schiff-base intermediate with substrate in the catalytic mechanism.

It belongs to the transaldolase family. Type 3B subfamily.

The protein resides in the cytoplasm. The enzyme catalyses D-sedoheptulose 7-phosphate + D-glyceraldehyde 3-phosphate = D-erythrose 4-phosphate + beta-D-fructose 6-phosphate. It functions in the pathway carbohydrate degradation; pentose phosphate pathway; D-glyceraldehyde 3-phosphate and beta-D-fructose 6-phosphate from D-ribose 5-phosphate and D-xylulose 5-phosphate (non-oxidative stage): step 2/3. Transaldolase is important for the balance of metabolites in the pentose-phosphate pathway. The chain is Probable transaldolase from Thermosipho africanus (strain TCF52B).